A 706-amino-acid chain; its full sequence is Choline transporter-like protein 2 (706 aa).

Over 1–32 (MMELEGEKPNYGEPRKYDPTFKGPIYNRGCTD) the chain is Cytoplasmic. A helical membrane pass occupies residues 33–53 (IVCCIFFIICILGYVAVGILA). The Extracellular segment spans residues 54–232 (WSQGDPRKVI…KIFEDYTQSW (179 aa)). N-linked (GlcNAc...) asparagine glycans are attached at residues N187 and N210. The chain crosses the membrane as a helical span at residues 233-253 (YWILIGLVIAMLISLLFIVLL). Over 254-256 (RFL) the chain is Cytoplasmic. A helical membrane pass occupies residues 257–277 (AGIMVWVMIVMVILVIGYGIF). Residues 278–315 (HCSMEYVSLKSEAGSNVTLKDLGFQTDFSVYLHIRQTW) are Extracellular-facing. The N-linked (GlcNAc...) asparagine glycan is linked to N293. Residues 316–336 (LAFIIILAIVEVVIILLLIFL) form a helical membrane-spanning segment. The Cytoplasmic segment spans residues 337-364 (RNRILIAIALIKEASRAIGYVMSALFYP). Residues 365-385 (LFTFALLSIVIAYWAVTAVFL) form a helical membrane-spanning segment. Over 386-454 (STSNQPIYKV…LQFYNVFLFF (69 aa)) the chain is Extracellular. N-linked (GlcNAc...) asparagine glycosylation is found at N397 and N412. The helical transmembrane segment at 455 to 477 (WCANFVTALGQMTLAGAFASYYW) threads the bilayer. Residues 478-504 (ALVKPDDMPAFPIFSSLGRSLRYHTGS) lie on the Cytoplasmic side of the membrane. A helical transmembrane segment spans residues 505–525 (LAFGSLILSIIQIIRVLLEYI). Topologically, residues 526–599 (DHKLQGTQNK…RVAVLDKVTD (74 aa)) are extracellular. A helical membrane pass occupies residues 600-620 (FLLFLGKLLIVGLVGIFAFFF). Residues 621-638 (FSGRVKAFENTAPNLHYY) are Cytoplasmic-facing. A helical membrane pass occupies residues 639–659 (WVPILTVVVGSYLIAHGFFSV). The Extracellular portion of the chain corresponds to 660-706 (YAMCVDTLFLCFLEDLERNDGSAERPYLMSDRLLKVLNKKNKPEPAE).

The protein belongs to the CTL (choline transporter-like) family.

It localises to the cell membrane. Its subcellular location is the mitochondrion outer membrane. It catalyses the reaction choline(out) + n H(+)(in) = choline(in) + n H(+)(out). It carries out the reaction ethanolamine(out) + n H(+)(in) = ethanolamine(in) + n H(+)(out). Its function is as follows. Choline/H+ antiporter, mainly in mitochodria. Also acts as a low-affinity ethanolamine/H+ antiporter, regulating the supply of extracellular ethanolamine (Etn) for the CDP-Etn pathway, redistribute intracellular Etn and balance the CDP-Cho and CDP-Etn arms of the Kennedy pathway. In Salmo salar (Atlantic salmon), this protein is Choline transporter-like protein 2 (slc44a2).